The following is a 342-amino-acid chain: tRNA N6-adenosine threonylcarbamoyltransferase (342 aa).

2 residues coordinate Fe cation: His-111 and His-115. Residues 134–138, Asp-167, Gly-180, Asp-184, and Asn-273 contribute to the substrate site; that span reads LVSGG. Asp-298 is a Fe cation binding site.

It belongs to the KAE1 / TsaD family. It depends on Fe(2+) as a cofactor.

It localises to the cytoplasm. The enzyme catalyses L-threonylcarbamoyladenylate + adenosine(37) in tRNA = N(6)-L-threonylcarbamoyladenosine(37) in tRNA + AMP + H(+). Required for the formation of a threonylcarbamoyl group on adenosine at position 37 (t(6)A37) in tRNAs that read codons beginning with adenine. Is involved in the transfer of the threonylcarbamoyl moiety of threonylcarbamoyl-AMP (TC-AMP) to the N6 group of A37, together with TsaE and TsaB. TsaD likely plays a direct catalytic role in this reaction. The protein is tRNA N6-adenosine threonylcarbamoyltransferase of Gloeobacter violaceus (strain ATCC 29082 / PCC 7421).